Reading from the N-terminus, the 402-residue chain is MYTSEERCNQRTQKRKIYNVCPQKGKKIFIHVHAITQIDGHIYQCLECKQNFCENLALIMCERTHTGEKPYKCDMCEKTFVQSSDLISHQRIHNYEKPYKCSKCEKSFWHHLALSGHQRTHAGKKFYTCDICGKNFGQSSDLLVHQRSHTGEKPYLCSECDKCFSRSTNLIRHRRTHTGEKPFKCLECEKAFSGKSDLISHQRTHTGERPYKCNKCEKSYRHRSAFIVHKRVHTGEKPYKCGACEKCFGQKSDLIVHQRVHTGEKPYKCLECMRSFTRSANLIRHQATHTHTFKCLEYEKSFNCSSDLIVHQRIHMEEKPHQWSTCESGFLLGMDFVAQQKMRTQTEELHYKYTVCDKSFHQSSALLQHQTVHTGEKPFICNVSEKGLELSPPHASEASQMS.

The C2H2-type 1; atypical zinc-finger motif lies at 43-65 (YQCLECKQNFCENLALIMCERTH). 8 consecutive C2H2-type zinc fingers follow at residues 71 to 93 (YKCDMCEKTFVQSSDLISHQRIH), 99 to 121 (YKCSKCEKSFWHHLALSGHQRTH), 127 to 149 (YTCDICGKNFGQSSDLLVHQRSH), 155 to 177 (YLCSECDKCFSRSTNLIRHRRTH), 183 to 205 (FKCLECEKAFSGKSDLISHQRTH), 211 to 233 (YKCNKCEKSYRHRSAFIVHKRVH), 239 to 261 (YKCGACEKCFGQKSDLIVHQRVH), and 267 to 289 (YKCLECMRSFTRSANLIRHQATH). The segment at 293–315 (FKCLEYEKSFNCSSDLIVHQRIH) adopts a C2H2-type 10; degenerate zinc-finger fold. A C2H2-type 11; degenerate zinc finger spans residues 351–373 (YKYTVCDKSFHQSSALLQHQTVH). Residue Ser-391 is modified to Phosphoserine.

It belongs to the krueppel C2H2-type zinc-finger protein family. In terms of assembly, interacts with POU5F1.

It localises to the cytoplasm. The protein resides in the nucleus. Transcriptional activator. Important for maintenance of pluripotency in embryonic stem cells. Binds directly to the POU5F1 distal enhancer and the NANOG proximal promoter, and enhances expression of both genes. Can also bind to numerous other gene promoters and regulates expression of many other pluripotency factors, either directly or indirectly. Promotes inhibition of MAPK signaling during embryonic stem cell differentiation. This Macaca fascicularis (Crab-eating macaque) protein is Zinc finger protein 322 (ZNF322).